Consider the following 268-residue polypeptide: Tryptophan synthase alpha chain (268 aa).

Residues Glu-40 and Asp-51 each act as proton acceptor in the active site.

This sequence belongs to the TrpA family. As to quaternary structure, tetramer of two alpha and two beta chains.

The catalysed reaction is (1S,2R)-1-C-(indol-3-yl)glycerol 3-phosphate + L-serine = D-glyceraldehyde 3-phosphate + L-tryptophan + H2O. It participates in amino-acid biosynthesis; L-tryptophan biosynthesis; L-tryptophan from chorismate: step 5/5. Functionally, the alpha subunit is responsible for the aldol cleavage of indoleglycerol phosphate to indole and glyceraldehyde 3-phosphate. This is Tryptophan synthase alpha chain from Geobacillus kaustophilus (strain HTA426).